The following is a 357-amino-acid chain: UDP-N-acetylglucosamine--N-acetylmuramyl-(pentapeptide) pyrophosphoryl-undecaprenol N-acetylglucosamine transferase (357 aa).

UDP-N-acetyl-alpha-D-glucosamine-binding positions include 11 to 13 (TGG), Asn-123, Arg-159, Ser-187, Ile-241, 260 to 265 (ALTVAE), and Gln-286.

It belongs to the glycosyltransferase 28 family. MurG subfamily.

It localises to the cell inner membrane. It carries out the reaction di-trans,octa-cis-undecaprenyl diphospho-N-acetyl-alpha-D-muramoyl-L-alanyl-D-glutamyl-meso-2,6-diaminopimeloyl-D-alanyl-D-alanine + UDP-N-acetyl-alpha-D-glucosamine = di-trans,octa-cis-undecaprenyl diphospho-[N-acetyl-alpha-D-glucosaminyl-(1-&gt;4)]-N-acetyl-alpha-D-muramoyl-L-alanyl-D-glutamyl-meso-2,6-diaminopimeloyl-D-alanyl-D-alanine + UDP + H(+). The protein operates within cell wall biogenesis; peptidoglycan biosynthesis. In terms of biological role, cell wall formation. Catalyzes the transfer of a GlcNAc subunit on undecaprenyl-pyrophosphoryl-MurNAc-pentapeptide (lipid intermediate I) to form undecaprenyl-pyrophosphoryl-MurNAc-(pentapeptide)GlcNAc (lipid intermediate II). In Aromatoleum aromaticum (strain DSM 19018 / LMG 30748 / EbN1) (Azoarcus sp. (strain EbN1)), this protein is UDP-N-acetylglucosamine--N-acetylmuramyl-(pentapeptide) pyrophosphoryl-undecaprenol N-acetylglucosamine transferase.